Reading from the N-terminus, the 217-residue chain is Thiamine-phosphate synthase (217 aa).

4-amino-2-methyl-5-(diphosphooxymethyl)pyrimidine contacts are provided by residues 37–41 (QFREK) and asparagine 72. Positions 73 and 92 each coordinate Mg(2+). Serine 110 is a 4-amino-2-methyl-5-(diphosphooxymethyl)pyrimidine binding site. Position 136-138 (136-138 (TVS)) interacts with 2-[(2R,5Z)-2-carboxy-4-methylthiazol-5(2H)-ylidene]ethyl phosphate. Lysine 139 serves as a coordination point for 4-amino-2-methyl-5-(diphosphooxymethyl)pyrimidine. 2-[(2R,5Z)-2-carboxy-4-methylthiazol-5(2H)-ylidene]ethyl phosphate contacts are provided by residues glycine 168 and 188 to 189 (IS).

It belongs to the thiamine-phosphate synthase family. Mg(2+) is required as a cofactor.

It carries out the reaction 2-[(2R,5Z)-2-carboxy-4-methylthiazol-5(2H)-ylidene]ethyl phosphate + 4-amino-2-methyl-5-(diphosphooxymethyl)pyrimidine + 2 H(+) = thiamine phosphate + CO2 + diphosphate. The catalysed reaction is 2-(2-carboxy-4-methylthiazol-5-yl)ethyl phosphate + 4-amino-2-methyl-5-(diphosphooxymethyl)pyrimidine + 2 H(+) = thiamine phosphate + CO2 + diphosphate. The enzyme catalyses 4-methyl-5-(2-phosphooxyethyl)-thiazole + 4-amino-2-methyl-5-(diphosphooxymethyl)pyrimidine + H(+) = thiamine phosphate + diphosphate. Its pathway is cofactor biosynthesis; thiamine diphosphate biosynthesis; thiamine phosphate from 4-amino-2-methyl-5-diphosphomethylpyrimidine and 4-methyl-5-(2-phosphoethyl)-thiazole: step 1/1. Condenses 4-methyl-5-(beta-hydroxyethyl)thiazole monophosphate (THZ-P) and 2-methyl-4-amino-5-hydroxymethyl pyrimidine pyrophosphate (HMP-PP) to form thiamine monophosphate (TMP). In Anoxybacillus flavithermus (strain DSM 21510 / WK1), this protein is Thiamine-phosphate synthase.